The sequence spans 168 residues: Protein-export protein SecB (168 aa).

This sequence belongs to the SecB family. As to quaternary structure, homotetramer, a dimer of dimers. One homotetramer interacts with 1 SecA dimer.

The protein localises to the cytoplasm. Functionally, one of the proteins required for the normal export of preproteins out of the cell cytoplasm. It is a molecular chaperone that binds to a subset of precursor proteins, maintaining them in a translocation-competent state. It also specifically binds to its receptor SecA. The protein is Protein-export protein SecB of Sinorhizobium medicae (strain WSM419) (Ensifer medicae).